A 96-amino-acid chain; its full sequence is Co-chaperonin GroES (96 aa).

The protein belongs to the GroES chaperonin family. Heptamer of 7 subunits arranged in a ring. Interacts with the chaperonin GroEL.

Its subcellular location is the cytoplasm. Functionally, together with the chaperonin GroEL, plays an essential role in assisting protein folding. The GroEL-GroES system forms a nano-cage that allows encapsulation of the non-native substrate proteins and provides a physical environment optimized to promote and accelerate protein folding. GroES binds to the apical surface of the GroEL ring, thereby capping the opening of the GroEL channel. The chain is Co-chaperonin GroES from Aliivibrio fischeri (strain ATCC 700601 / ES114) (Vibrio fischeri).